The following is a 592-amino-acid chain: RNA-binding protein 47 (592 aa).

Positions 1–24 (MTAEDAAAAMSSDSAAGGAASAKA) are enriched in low complexity. Residues 1 to 26 (MTAEDAAAAMSSDSAAGGAASAKAPE) form a disordered region. RRM domains are found at residues 73 to 151 (CEVF…CSVD), 153 to 235 (CRLF…WAEP), and 248 to 320 (KILY…LAKP). Asymmetric dimethylarginine; alternate occurs at positions 397 and 408. Arginine 397 and arginine 408 each carry omega-N-methylarginine; alternate.

The protein belongs to the RRM RBM47 family. In terms of assembly, homodimer. Interacts with A1CF. Interacts with APOBEC1; form an mRNA editing complex. Interacts with RBPMS.

It localises to the nucleus. Its subcellular location is the cytoplasm. Functionally, single-stranded RNA-binding protein that functions in a variety of RNA processes, including alternative splicing, RNA stabilization, and RNA editing. Functions as an enzyme-substrate adapter for the cytidine deaminase APOBEC1. With APOBEC1 forms an mRNA editing complex involved into cytidine to uridine editing of a variety of mRNA molecules. Through the binding of their 3'UTR, also stabilizes a variety of mRNAs and regulates the expression of genes such as the interferon alpha/beta receptor and interleukin-10. Also involved in the alternative splicing of several genes including TJP1. Binds the pre-mRNA (U)GCAUG consensus sequences in downstream intronic regions of alternative exons, regulating their exclusion and inclusion into mRNAs. Independently of its RNA-binding activity, could negatively regulate MAVS by promoting its lysosomal degradation. The sequence is that of RNA-binding protein 47 from Canis lupus familiaris (Dog).